Here is a 417-residue protein sequence, read N- to C-terminus: Dihydroorotase (417 aa).

Zn(2+) is bound by residues His60 and His62. Residues 62–64 (HLR) and Asn94 contribute to the substrate site. The Zn(2+) site is built by Lys138, His167, His207, and Asp275. Lys138 is subject to N6-carboxylysine. Asp275 is a catalytic residue. Substrate is bound by residues His279 and 289 to 290 (AG).

Belongs to the metallo-dependent hydrolases superfamily. DHOase family. Class I DHOase subfamily. It depends on Zn(2+) as a cofactor.

It catalyses the reaction (S)-dihydroorotate + H2O = N-carbamoyl-L-aspartate + H(+). It participates in pyrimidine metabolism; UMP biosynthesis via de novo pathway; (S)-dihydroorotate from bicarbonate: step 3/3. In terms of biological role, catalyzes the reversible cyclization of carbamoyl aspartate to dihydroorotate. In Pyrococcus horikoshii (strain ATCC 700860 / DSM 12428 / JCM 9974 / NBRC 100139 / OT-3), this protein is Dihydroorotase.